The primary structure comprises 424 residues: Histidine--tRNA ligase (424 aa).

Positions M1 to P22 are disordered.

It belongs to the class-II aminoacyl-tRNA synthetase family. As to quaternary structure, homodimer.

It localises to the cytoplasm. The catalysed reaction is tRNA(His) + L-histidine + ATP = L-histidyl-tRNA(His) + AMP + diphosphate + H(+). The protein is Histidine--tRNA ligase of Rubrobacter xylanophilus (strain DSM 9941 / JCM 11954 / NBRC 16129 / PRD-1).